Here is a 238-residue protein sequence, read N- to C-terminus: Pyridoxine 5'-phosphate synthase (238 aa).

Asn7 contributes to the 3-amino-2-oxopropyl phosphate binding site. 1-deoxy-D-xylulose 5-phosphate is bound at residue 9-10; it reads DH. Residue Arg18 coordinates 3-amino-2-oxopropyl phosphate. His43 functions as the Proton acceptor in the catalytic mechanism. Arg45 and His50 together coordinate 1-deoxy-D-xylulose 5-phosphate. Glu70 acts as the Proton acceptor in catalysis. Residue Thr100 participates in 1-deoxy-D-xylulose 5-phosphate binding. Residue His190 is the Proton donor of the active site. 3-amino-2-oxopropyl phosphate is bound by residues Gly191 and 212-213; that span reads GH.

It belongs to the PNP synthase family. In terms of assembly, homooctamer; tetramer of dimers.

It is found in the cytoplasm. The enzyme catalyses 3-amino-2-oxopropyl phosphate + 1-deoxy-D-xylulose 5-phosphate = pyridoxine 5'-phosphate + phosphate + 2 H2O + H(+). It participates in cofactor biosynthesis; pyridoxine 5'-phosphate biosynthesis; pyridoxine 5'-phosphate from D-erythrose 4-phosphate: step 5/5. Catalyzes the complicated ring closure reaction between the two acyclic compounds 1-deoxy-D-xylulose-5-phosphate (DXP) and 3-amino-2-oxopropyl phosphate (1-amino-acetone-3-phosphate or AAP) to form pyridoxine 5'-phosphate (PNP) and inorganic phosphate. The sequence is that of Pyridoxine 5'-phosphate synthase from Prochlorococcus marinus (strain MIT 9312).